The following is a 120-amino-acid chain: Large ribosomal subunit protein uL18 (120 aa).

A disordered region spans residues 1–29 (MITKPNKNAGRKKRHAHVRRTLSGTPQRP). The segment covering 9–20 (AGRKKRHAHVRR) has biased composition (basic residues).

Belongs to the universal ribosomal protein uL18 family. In terms of assembly, part of the 50S ribosomal subunit; part of the 5S rRNA/L5/L18/L25 subcomplex. Contacts the 5S and 23S rRNAs.

Functionally, this is one of the proteins that bind and probably mediate the attachment of the 5S RNA into the large ribosomal subunit, where it forms part of the central protuberance. In Shouchella clausii (strain KSM-K16) (Alkalihalobacillus clausii), this protein is Large ribosomal subunit protein uL18.